Reading from the N-terminus, the 138-residue chain is ATP synthase epsilon chain (138 aa).

Belongs to the ATPase epsilon chain family. F-type ATPases have 2 components, CF(1) - the catalytic core - and CF(0) - the membrane proton channel. CF(1) has five subunits: alpha(3), beta(3), gamma(1), delta(1), epsilon(1). CF(0) has three main subunits: a, b and c.

It is found in the cell inner membrane. Produces ATP from ADP in the presence of a proton gradient across the membrane. The sequence is that of ATP synthase epsilon chain from Geobacter sp. (strain M21).